A 189-amino-acid polypeptide reads, in one-letter code: Molybdopterin synthase catalytic subunit (189 aa).

S20 bears the Phosphoserine mark. Residues 143–144, K159, and 166–168 contribute to the substrate site; these read HR and KKE.

The protein belongs to the MoaE family. MOCS2B subfamily. In terms of assembly, heterotetramer; composed of 2 small (MOCS2A) and 2 large (MOCS2B) subunits.

It is found in the cytoplasm. It localises to the cytosol. It carries out the reaction 2 [molybdopterin-synthase sulfur-carrier protein]-C-terminal-Gly-aminoethanethioate + cyclic pyranopterin phosphate + H2O = molybdopterin + 2 [molybdopterin-synthase sulfur-carrier protein]-C-terminal Gly-Gly + 2 H(+). Its pathway is cofactor biosynthesis; molybdopterin biosynthesis. Its function is as follows. Catalytic subunit of the molybdopterin synthase complex, a complex that catalyzes the conversion of precursor Z into molybdopterin. Acts by mediating the incorporation of 2 sulfur atoms from thiocarboxylated MOCS2A into precursor Z to generate a dithiolene group. The protein is Molybdopterin synthase catalytic subunit of Bos taurus (Bovine).